The sequence spans 557 residues: Phosphoacetylglucosamine mutase (557 aa).

Ser67 functions as the Phosphoserine intermediate in the catalytic mechanism. Positions 67, 298, 300, and 302 each coordinate Mg(2+). Ser67 carries the phosphoserine modification. Residues Glu395–Asn397, Arg522–Thr526, and Arg531 contribute to the substrate site.

Belongs to the phosphohexose mutase family. Mg(2+) is required as a cofactor.

The protein localises to the cytoplasm. It localises to the nucleus. It carries out the reaction N-acetyl-alpha-D-glucosamine 1-phosphate = N-acetyl-D-glucosamine 6-phosphate. Its pathway is nucleotide-sugar biosynthesis; UDP-N-acetyl-alpha-D-glucosamine biosynthesis; N-acetyl-alpha-D-glucosamine 1-phosphate from alpha-D-glucosamine 6-phosphate (route I): step 2/2. In terms of biological role, catalyzes the conversion of GlcNAc-6-P into GlcNAc-1-P during the synthesis of uridine diphosphate/UDP-GlcNAc, which is a biosynthetic precursor of chitin and also supplies the amino sugars for N-linked oligosaccharides of glycoproteins. Also has phosphoglucomutase activity. In Saccharomyces cerevisiae (strain ATCC 204508 / S288c) (Baker's yeast), this protein is Phosphoacetylglucosamine mutase.